The primary structure comprises 361 residues: MMDSPKKLGYHMPAEYEPHHGTLMIWPTRPGSWPFQGKAAKRAFTQIIETIAEGERVYLLVEQAYLSEAQSYLGDKVVYLDIPTNDAWARDTGPTILVNDKGKKLAVDWAFNAWGGTYDGLYQDYEEDDQVASRFAEALERPVYDAKPFVLEGGAIHSDGQGTILVTESCLLSPGRNPNLTKEEIENTLLESLGAEKVIWLPYGIYQDETNEHVDNVAAFVGPAELVLAWTDDENDPQYAMSKADLELLEQETDAKGCHFTIHKLPIPAVRQVVTEEDLPGYIYEEGEEKRYAGERLAASYVNFYIANKAVLVPQFEDVNDQVALDILSKCFPDRKVVGIPARDILLGGGNIHCITQQIPE.

The active-site Amidino-cysteine intermediate is cysteine 354.

Belongs to the agmatine deiminase family.

The catalysed reaction is agmatine + H2O = N-carbamoylputrescine + NH4(+). The polypeptide is Putative agmatine deiminase (Streptococcus pneumoniae (strain 70585)).